We begin with the raw amino-acid sequence, 269 residues long: Tryptophan synthase alpha chain (269 aa).

Residues Glu50 and Asp61 each act as proton acceptor in the active site.

This sequence belongs to the TrpA family. Tetramer of two alpha and two beta chains.

It catalyses the reaction (1S,2R)-1-C-(indol-3-yl)glycerol 3-phosphate + L-serine = D-glyceraldehyde 3-phosphate + L-tryptophan + H2O. The protein operates within amino-acid biosynthesis; L-tryptophan biosynthesis; L-tryptophan from chorismate: step 5/5. Its function is as follows. The alpha subunit is responsible for the aldol cleavage of indoleglycerol phosphate to indole and glyceraldehyde 3-phosphate. The protein is Tryptophan synthase alpha chain of Francisella tularensis subsp. tularensis (strain WY96-3418).